A 435-amino-acid polypeptide reads, in one-letter code: GTPase Der (435 aa).

EngA-type G domains are found at residues 4 to 167 (KIVA…SKND) and 175 to 350 (TKIA…QSLS). Residues 10–17 (GRPNVGKS), 57–61 (DTGGI), 119–122 (NKYD), 181–188 (GRPNVGKS), 228–232 (DTAGI), and 293–296 (NKWD) contribute to the GTP site. One can recognise a KH-like domain in the interval 351 to 435 (VKVKTYVLNE…PINLIFRERK (85 aa)).

The protein belongs to the TRAFAC class TrmE-Era-EngA-EngB-Septin-like GTPase superfamily. EngA (Der) GTPase family. In terms of assembly, associates with the 50S ribosomal subunit.

Functionally, GTPase that plays an essential role in the late steps of ribosome biogenesis. This Mycoplasma mycoides subsp. mycoides SC (strain CCUG 32753 / NCTC 10114 / PG1) protein is GTPase Der.